Consider the following 585-residue polypeptide: MEQYEVLEQIGKGSFGSALLVRHKVEKKRYVLKKIRLARQTDRCRRSAHQEMELIAKVRNPYIVEYKDSWVEKGCYVCIVIGYCEGGDMSEAIKKANSNYFSEERLCMWLVQLLMALDYLHVNHILHRDVKCSNIFLTKDQNIRLGDFGLAKVLTSDDLTSSVVGTPSYMCPELLADIPYGSKSDIWSLGCCLYEMTALKPAFKAFDMQTLINKISKSVLAPLPTIYSGAFRGLIKSMLRKSPDHRPSAAELLKHPHLQPFVLELQLKSSPARNLFPDTNKASCSDDENNWKAKYSKSHSFKVDRIVKVDKVAANNGHPSSTGTAKDYQELLKQPMDELLGQLTEKVVDEVIHGNHSRVTKSPAPTPRRASSTPRIRLEPSKTFHARAAETPPSKCSLERASQPTRRASTPVNMLQTPEKRQGADILTRLKSPDVSVNSPRIDRIAEFPIPSFDDEQLHPTTKLKLYPPSITDQSITKDKCTFQVLRSDSSKNHTGDSSDPSILGTDSNPLITSSSDWMKQRRFDTTSYRQRAEALEGLLEFSAQLLQQERFEELGILLKPFGPGKASPRETAIWLSKSFKGTGL.

One can recognise a Protein kinase domain in the interval 4 to 258; the sequence is YEVLEQIGKG…AAELLKHPHL (255 aa). ATP-binding positions include 10-18 and K33; that span reads IGKGSFGSA. D129 acts as the Proton acceptor in catalysis. Disordered stretches follow at residues 354–413 and 489–511; these read GNHS…TPVN and DSSKNHTGDSSDPSILGTDSNPL. Polar residues-rich tracts occupy residues 400 to 413 and 498 to 511; these read RASQPTRRASTPVN and SSDPSILGTDSNPL.

It belongs to the protein kinase superfamily. NEK Ser/Thr protein kinase family. NIMA subfamily. Interacts with PLIM2B. In terms of tissue distribution, expressed in pollen grains.

The catalysed reaction is L-seryl-[protein] + ATP = O-phospho-L-seryl-[protein] + ADP + H(+). The enzyme catalyses L-threonyl-[protein] + ATP = O-phospho-L-threonyl-[protein] + ADP + H(+). Its function is as follows. May be involved in plant development processes. May function downstream of DCW11 in retrograde signaling from the mitochondria to the nucleus. Seems to be involved in the mechanism of cytoplasmic male sterility (CMS) occurrence. In Oryza sativa subsp. japonica (Rice), this protein is Serine/threonine-protein kinase Nek3.